Consider the following 84-residue polypeptide: Small ribosomal subunit protein uS17c (84 aa).

Belongs to the universal ribosomal protein uS17 family. Part of the 30S ribosomal subunit.

It localises to the plastid. It is found in the chloroplast. Its function is as follows. One of the primary rRNA binding proteins, it binds specifically to the 5'-end of 16S ribosomal RNA. This is Small ribosomal subunit protein uS17c (rps17) from Phaeodactylum tricornutum (strain CCAP 1055/1).